Consider the following 76-residue polypeptide: Acyl carrier protein (76 aa).

Residues 1–76 (MSLEEKVKNI…DVIEYIKAHT (76 aa)) enclose the Carrier domain. Ser36 is subject to O-(pantetheine 4'-phosphoryl)serine.

Belongs to the acyl carrier protein (ACP) family. 4'-phosphopantetheine is transferred from CoA to a specific serine of apo-ACP by AcpS. This modification is essential for activity because fatty acids are bound in thioester linkage to the sulfhydryl of the prosthetic group.

The protein resides in the cytoplasm. It participates in lipid metabolism; fatty acid biosynthesis. Its function is as follows. Carrier of the growing fatty acid chain in fatty acid biosynthesis. This Desulfatibacillum aliphaticivorans protein is Acyl carrier protein.